The sequence spans 177 residues: MGVTVDVHQVFQYPFEQVVACFLRKYPNPMDKNVISVKTVEEKKDESTGLIYRKRIAICQNVVPEILRKVSILKVPDIQLEEESWLSLQKRNMAIRSHCLTWTQYASMREESVFRESVENPNWTEFIQTGRISITGAGFLNCILETFASTFLRQGAQKGIRIMEMLLKEQCGSPLVE.

One can recognise a PRELI/MSF1 domain in the interval 1-175 (MGVTVDVHQV…LLKEQCGSPL (175 aa)).

The protein is PRELI domain-containing protein 2 (Prelid2) of Mus musculus (Mouse).